A 557-amino-acid chain; its full sequence is Potassium-transporting ATPase potassium-binding subunit (557 aa).

The next 12 membrane-spanning stretches (helical) occupy residues 5-25 (GFLL…PLGS), 63-83 (LCAI…MLLG), 132-152 (GLTV…FALI), 170-190 (LLRI…LFFI), 253-273 (FVQM…FGEV), 283-303 (LLWA…WAEV), 329-349 (VLVS…AVIA), 356-376 (ALGG…FGGV), 379-399 (GLYG…LMIG), 416-436 (LTAL…ALAM), 484-504 (LLAF…MAIA), and 526-546 (LFVG…FIPA).

The protein belongs to the KdpA family. The system is composed of three essential subunits: KdpA, KdpB and KdpC.

Its subcellular location is the cell inner membrane. Functionally, part of the high-affinity ATP-driven potassium transport (or Kdp) system, which catalyzes the hydrolysis of ATP coupled with the electrogenic transport of potassium into the cytoplasm. This subunit binds the periplasmic potassium ions and delivers the ions to the membrane domain of KdpB through an intramembrane tunnel. The sequence is that of Potassium-transporting ATPase potassium-binding subunit from Escherichia coli (strain SE11).